The primary structure comprises 124 residues: Histone H2A (124 aa).

A compositionally biased stretch (basic residues) spans 1 to 18 (MSGRGKSGKARTKAKSRS). A disordered region spans residues 1-21 (MSGRGKSGKARTKAKSRSSRA). S2 carries the post-translational modification N-acetylserine. Position 2 is a phosphoserine (S2). N5-methylglutamine is present on Q104. K119 is covalently cross-linked (Glycyl lysine isopeptide (Lys-Gly) (interchain with G-Cter in ubiquitin)).

It belongs to the histone H2A family. In terms of assembly, the nucleosome is a histone octamer containing two molecules each of H2A, H2B, H3 and H4 assembled in one H3-H4 heterotetramer and two H2A-H2B heterodimers. The octamer wraps approximately 147 bp of DNA. Monoubiquitination of Lys-119 gives a specific tag for epigenetic transcriptional repression. In terms of processing, phosphorylation of Ser-2 directly represses transcription.

The protein resides in the nucleus. The protein localises to the chromosome. Functionally, core component of nucleosome. Nucleosomes wrap and compact DNA into chromatin, limiting DNA accessibility to the cellular machineries which require DNA as a template. Histones thereby play a central role in transcription regulation, DNA repair, DNA replication and chromosomal stability. DNA accessibility is regulated via a complex set of post-translational modifications of histones, also called histone code, and nucleosome remodeling. This chain is Histone H2A, found in Paracentrotus lividus (Common sea urchin).